Here is a 430-residue protein sequence, read N- to C-terminus: Asparagine--tRNA ligase (430 aa).

The protein belongs to the class-II aminoacyl-tRNA synthetase family. Homodimer.

It is found in the cytoplasm. The catalysed reaction is tRNA(Asn) + L-asparagine + ATP = L-asparaginyl-tRNA(Asn) + AMP + diphosphate + H(+). This is Asparagine--tRNA ligase from Staphylococcus aureus (strain MSSA476).